Reading from the N-terminus, the 159-residue chain is Transcriptional repressor NrdR (159 aa).

Positions 1-11 are enriched in polar residues; sequence MQCPTCQNTDS. Positions 1–21 are disordered; it reads MQCPTCQNTDSRVLESRSADS. Residues 3–34 fold into a zinc finger; sequence CPTCQNTDSRVLESRSADSGKSVRRRRECLNC. Positions 49 to 139 constitute an ATP-cone domain; the sequence is VSVMKKDGSR…VYRKFNGVKD (91 aa).

Belongs to the NrdR family. Zn(2+) is required as a cofactor.

Negatively regulates transcription of bacterial ribonucleotide reductase nrd genes and operons by binding to NrdR-boxes. The polypeptide is Transcriptional repressor NrdR (Prochlorococcus marinus (strain MIT 9215)).